Consider the following 423-residue polypeptide: Probable peptidoglycan glycosyltransferase FtsW (423 aa).

Residues 1–53 (MNLKEKLFPENRLGLNRFWNFSRGGIDNFRTGLRDAVSGVEQTRSRMMEYDQL) are Cytoplasmic-facing. The helical transmembrane segment at 54-74 (LVWAILSLMLIGLVMVYSASI) threads the bilayer. The Periplasmic portion of the chain corresponds to 75 to 88 (TLADGPKYANYSSN). A helical transmembrane segment spans residues 89-109 (FFLIRHMISLAIAIGVGIWAF). Topologically, residues 110-119 (KIPTKVWDRY) are cytoplasmic. A helical membrane pass occupies residues 120–140 (SPVIFGITVLLLIAVLIPGVG). Residues 141 to 149 (RGVNGAKRW) lie on the Periplasmic side of the membrane. The chain crosses the membrane as a helical span at residues 150 to 170 (IPLGLMNFQSSELMKFAAVIF). Residues 171–184 (AASYTVQRQEYLHS) lie on the Cytoplasmic side of the membrane. The helical transmembrane segment at 185–205 (FVKGMLPMGIAVALVGGLLMA) threads the bilayer. At 206-208 (EPD) the chain is on the periplasmic side. Residues 209–229 (MGAFVVVALIAFGILFLGGIN) form a helical membrane-spanning segment. Residues 230–231 (AK) are Cytoplasmic-facing. Residues 232–252 (LFGGLIAVGLMSGATMIAFSP) form a helical membrane-spanning segment. At 253-310 (LRRGRMLAFMDPWQVDNAANKGYQLTHSLMAFGRGEWFGTGLGGSVEKLHYLPEAHTD) the chain is on the periplasmic side. A helical membrane pass occupies residues 311 to 331 (FIMAVIGEELGFVGVVVMIFL). At 332-359 (FYWIVRRAFLIGRTALQLDRSFAGLAAK) the chain is on the cytoplasmic side. Residues 360-380 (GVAIWIGWQAFINMGVNLGLL) form a helical membrane-spanning segment. Residues 381 to 386 (PTKGLT) lie on the Periplasmic side of the membrane. A helical membrane pass occupies residues 387 to 407 (LPLVSYGGSGILMNAVAMAML). The Cytoplasmic portion of the chain corresponds to 408–423 (LRIDFENRILMRGGKL).

It belongs to the SEDS family. FtsW subfamily.

It localises to the cell inner membrane. It carries out the reaction [GlcNAc-(1-&gt;4)-Mur2Ac(oyl-L-Ala-gamma-D-Glu-L-Lys-D-Ala-D-Ala)](n)-di-trans,octa-cis-undecaprenyl diphosphate + beta-D-GlcNAc-(1-&gt;4)-Mur2Ac(oyl-L-Ala-gamma-D-Glu-L-Lys-D-Ala-D-Ala)-di-trans,octa-cis-undecaprenyl diphosphate = [GlcNAc-(1-&gt;4)-Mur2Ac(oyl-L-Ala-gamma-D-Glu-L-Lys-D-Ala-D-Ala)](n+1)-di-trans,octa-cis-undecaprenyl diphosphate + di-trans,octa-cis-undecaprenyl diphosphate + H(+). The protein operates within cell wall biogenesis; peptidoglycan biosynthesis. Peptidoglycan polymerase that is essential for cell division. In Polynucleobacter necessarius subsp. necessarius (strain STIR1), this protein is Probable peptidoglycan glycosyltransferase FtsW.